A 472-amino-acid chain; its full sequence is Inactive CLIP domain-containing serine protease A3 (472 aa).

2 helical membrane passes run 51 to 71 (ISFV…WSSM) and 78 to 98 (LPAL…HTYA). 4 N-linked (GlcNAc...) asparagine glycosylation sites follow: Asn-122, Asn-133, Asn-149, and Asn-152. Residues 223–470 (VAAAKAPAAG…YVPWITSTVS (248 aa)) enclose the Peptidase S1 domain. Cystine bridges form between Cys-354–Cys-428, Cys-386–Cys-408, and Cys-418–Cys-446.

It belongs to the peptidase S1 family. CLIP subfamily. In terms of tissue distribution, expressed at highest levels in head and salivary gland. Expressed in ovary and carcass. Minimal expression in midgut.

It localises to the membrane. Probable inactive serine protease. Induces migration of cultured mouse embryonic fibroblasts. Functionally, (Microbial infection) Promotes dengue virus type 2 replication in the host. The protein is Inactive CLIP domain-containing serine protease A3 of Aedes aegypti (Yellowfever mosquito).